A 491-amino-acid chain; its full sequence is UDP-N-acetylmuramate--L-alanine ligase (491 aa).

Position 126–132 (126–132 (GTHGKTT)) interacts with ATP.

This sequence belongs to the MurCDEF family.

It is found in the cytoplasm. It catalyses the reaction UDP-N-acetyl-alpha-D-muramate + L-alanine + ATP = UDP-N-acetyl-alpha-D-muramoyl-L-alanine + ADP + phosphate + H(+). Its pathway is cell wall biogenesis; peptidoglycan biosynthesis. Cell wall formation. This Salmonella gallinarum (strain 287/91 / NCTC 13346) protein is UDP-N-acetylmuramate--L-alanine ligase.